We begin with the raw amino-acid sequence, 84 residues long: Small ribosomal subunit protein bS18 (84 aa).

The protein belongs to the bacterial ribosomal protein bS18 family. Part of the 30S ribosomal subunit. Forms a tight heterodimer with protein bS6.

Its function is as follows. Binds as a heterodimer with protein bS6 to the central domain of the 16S rRNA, where it helps stabilize the platform of the 30S subunit. The protein is Small ribosomal subunit protein bS18 of Clostridium kluyveri (strain NBRC 12016).